Reading from the N-terminus, the 145-residue chain is 3-dehydroquinate dehydratase (145 aa).

Catalysis depends on Tyr22, which acts as the Proton acceptor. Substrate is bound by residues Asn71, His77, and Asp84. His97 serves as the catalytic Proton donor. Residues 98–99 (LS) and Arg108 each bind substrate.

This sequence belongs to the type-II 3-dehydroquinase family. As to quaternary structure, homododecamer.

It carries out the reaction 3-dehydroquinate = 3-dehydroshikimate + H2O. The protein operates within metabolic intermediate biosynthesis; chorismate biosynthesis; chorismate from D-erythrose 4-phosphate and phosphoenolpyruvate: step 3/7. In terms of biological role, catalyzes a trans-dehydration via an enolate intermediate. In Francisella tularensis subsp. mediasiatica (strain FSC147), this protein is 3-dehydroquinate dehydratase.